The following is a 256-amino-acid chain: 6-carboxyhexanoate--CoA ligase (256 aa).

Belongs to the BioW family. Homodimer. Requires Mg(2+) as cofactor.

The catalysed reaction is heptanedioate + ATP + CoA = 6-carboxyhexanoyl-CoA + AMP + diphosphate. It participates in metabolic intermediate metabolism; pimeloyl-CoA biosynthesis; pimeloyl-CoA from pimelate: step 1/1. In terms of biological role, catalyzes the transformation of pimelate into pimeloyl-CoA with concomitant hydrolysis of ATP to AMP. The sequence is that of 6-carboxyhexanoate--CoA ligase from Bacillus velezensis (strain DSM 23117 / BGSC 10A6 / LMG 26770 / FZB42) (Bacillus amyloliquefaciens subsp. plantarum).